Here is a 523-residue protein sequence, read N- to C-terminus: DNA-directed RNA polymerase subunit Rpo2N (523 aa).

Residues 501–523 (SSMGVEGIPGISMETTSTTSADD) form a disordered region. Over residues 513 to 523 (METTSTTSADD) the composition is skewed to polar residues.

This sequence belongs to the RNA polymerase beta chain family. In terms of assembly, part of the RNA polymerase complex.

The protein localises to the cytoplasm. The enzyme catalyses RNA(n) + a ribonucleoside 5'-triphosphate = RNA(n+1) + diphosphate. Functionally, DNA-dependent RNA polymerase (RNAP) catalyzes the transcription of DNA into RNA using the four ribonucleoside triphosphates as substrates. The Rpo2 subunit (Rpo2N and Rpo2C in this organism) is implicated in DNA promoter recognition and in nucleotide binding. The chain is DNA-directed RNA polymerase subunit Rpo2N from Halobacterium salinarum (strain ATCC 29341 / DSM 671 / R1).